Consider the following 688-residue polypeptide: ATP-dependent zinc metalloprotease FTSH 6, chloroplastic (688 aa).

Residues 1 to 75 (MKMASSSSAL…GFTSALGTVL (75 aa)) constitute a chloroplast transit peptide. Residues 25-36 (QQFQKPASLSKS) are compositionally biased toward polar residues. Residues 25–44 (QQFQKPASLSKSSHTHKPSL) are disordered. The N-terminal 8 residues, 76 to 83 (AHPAKAEP), are a transit peptide targeting the thylakoid. Over 84–168 (EAPIEATSNR…AHPMNVNWGA (85 aa)) the chain is Lumenal, thylakoid. A helical membrane pass occupies residues 169-189 (FLLNFLGNLGFPLILLVSLLL). Over 190–688 (TSSSRRNPAG…RIRINDLISV (499 aa)) the chain is Stromal. ATP is bound at residue 264-271 (GPPGTGKT). Position 485 (His485) interacts with Zn(2+). Glu486 is an active-site residue. 2 residues coordinate Zn(2+): His489 and Asp563.

It in the N-terminal section; belongs to the AAA ATPase family. The protein in the C-terminal section; belongs to the peptidase M41 family. Zn(2+) is required as a cofactor.

The protein localises to the plastid. It is found in the chloroplast thylakoid membrane. In terms of biological role, probable ATP-dependent zinc metallopeptidase. Involved in the degradation of the light-harvesting complex of photosystem II (LHC II) during senescence or high light acclimation. In Arabidopsis thaliana (Mouse-ear cress), this protein is ATP-dependent zinc metalloprotease FTSH 6, chloroplastic (FTSH6).